Consider the following 953-residue polypeptide: Kinesin-like protein KIF23 (953 aa).

Residues 7-11 (KTVRK) carry the Nuclear localization signal motif. In terms of domain architecture, Kinesin motor spans 25 to 436 (PVGVYCRVRP…MRFAEVTQEV (412 aa)). 112–119 (GVTGSGKT) lines the ATP pocket. Phosphoserine occurs at positions 155 and 160. A coiled-coil region spans residues 542–618 (QEKLNEREKV…RRLEARLQGM (77 aa)). Residues Lys-572 and Lys-587 each participate in a glycyl lysine isopeptide (Lys-Gly) (interchain with G-Cter in SUMO2) cross-link. The residue at position 606 (Ser-606) is a Phosphoserine. Glycyl lysine isopeptide (Lys-Gly) (interchain with G-Cter in SUMO2) cross-links involve residues Lys-625, Lys-648, Lys-663, and Lys-666. Residues 658–695 (IVTEPKPEKPERPSRERDREKIIPRSVSPSPLPLSSNN) are disordered. The span at 662 to 680 (PKPEKPERPSRERDREKII) shows a compositional bias: basic and acidic residues. A compositionally biased stretch (low complexity) spans 681 to 693 (PRSVSPSPLPLSS). 2 positions are modified to phosphoserine: Ser-683 and Ser-685. Position 739 is a phosphothreonine (Thr-739). Ser-807 is subject to Phosphoserine. Residues Lys-816 and Lys-847 each participate in a glycyl lysine isopeptide (Lys-Gly) (interchain with G-Cter in SUMO2) cross-link. A Phosphoserine modification is found at Ser-860. Residues Lys-867, Lys-870, and Lys-892 each participate in a glycyl lysine isopeptide (Lys-Gly) (interchain with G-Cter in SUMO2) cross-link. Disordered regions lie at residues 894-921 (ELPT…EWTD) and 934-953 (AGSQ…RKKP). Ser-904 is modified (phosphoserine). Thr-920 bears the Phosphothreonine mark. Residue Lys-949 forms a Glycyl lysine isopeptide (Lys-Gly) (interchain with G-Cter in SUMO2) linkage.

The protein belongs to the TRAFAC class myosin-kinesin ATPase superfamily. Kinesin family. In terms of assembly, heterotetramer of two molecules each of RACGAP1 and KIF23. Found in the centralspindlin complex. Interacts with RACGAP1; the interaction is direct. Interacts with ECT2 and PRC1. Interacts with ANXA11 during cytokinesis. Interacts with BIRC6/bruce and USP8/UBPY. Interacts with ARF6, forming heterodimers and heterotetramers. In terms of processing, ubiquitinated. Deubiquitinated by USP8/UBPY. Detected in testis and ovary from newborn mice (at protein level). Detected in brain, spinal cord and small intestine.

It is found in the nucleus. Its subcellular location is the cytoplasm. It localises to the cytoskeleton. The protein resides in the spindle. The protein localises to the midbody. It is found in the midbody ring. Component of the centralspindlin complex that serves as a microtubule-dependent and Rho-mediated signaling required for the myosin contractile ring formation during the cell cycle cytokinesis. Essential for cytokinesis in Rho-mediated signaling. Required for the localization of ECT2 to the central spindle. Plus-end-directed motor enzyme that moves antiparallel microtubules in vitro. This chain is Kinesin-like protein KIF23 (Kif23), found in Mus musculus (Mouse).